The following is a 209-amino-acid chain: Imidazole glycerol phosphate synthase subunit HisH (209 aa).

Residues 5 to 209 (AIAIIDYDMG…LRNFVALVKD (205 aa)) enclose the Glutamine amidotransferase type-1 domain. The active-site Nucleophile is Cys83. Catalysis depends on residues His188 and Glu190.

In terms of assembly, heterodimer of HisH and HisF.

The protein resides in the cytoplasm. The catalysed reaction is 5-[(5-phospho-1-deoxy-D-ribulos-1-ylimino)methylamino]-1-(5-phospho-beta-D-ribosyl)imidazole-4-carboxamide + L-glutamine = D-erythro-1-(imidazol-4-yl)glycerol 3-phosphate + 5-amino-1-(5-phospho-beta-D-ribosyl)imidazole-4-carboxamide + L-glutamate + H(+). It carries out the reaction L-glutamine + H2O = L-glutamate + NH4(+). The protein operates within amino-acid biosynthesis; L-histidine biosynthesis; L-histidine from 5-phospho-alpha-D-ribose 1-diphosphate: step 5/9. IGPS catalyzes the conversion of PRFAR and glutamine to IGP, AICAR and glutamate. The HisH subunit catalyzes the hydrolysis of glutamine to glutamate and ammonia as part of the synthesis of IGP and AICAR. The resulting ammonia molecule is channeled to the active site of HisF. The protein is Imidazole glycerol phosphate synthase subunit HisH of Thermosynechococcus vestitus (strain NIES-2133 / IAM M-273 / BP-1).